The sequence spans 250 residues: 1-(5-phosphoribosyl)-5-[(5-phosphoribosylamino)methylideneamino] imidazole-4-carboxamide isomerase (250 aa).

The Proton acceptor role is filled by Asp-8. The active-site Proton donor is Asp-129.

It belongs to the HisA/HisF family.

The protein resides in the cytoplasm. It carries out the reaction 1-(5-phospho-beta-D-ribosyl)-5-[(5-phospho-beta-D-ribosylamino)methylideneamino]imidazole-4-carboxamide = 5-[(5-phospho-1-deoxy-D-ribulos-1-ylimino)methylamino]-1-(5-phospho-beta-D-ribosyl)imidazole-4-carboxamide. The protein operates within amino-acid biosynthesis; L-histidine biosynthesis; L-histidine from 5-phospho-alpha-D-ribose 1-diphosphate: step 4/9. The chain is 1-(5-phosphoribosyl)-5-[(5-phosphoribosylamino)methylideneamino] imidazole-4-carboxamide isomerase from Desulfatibacillum aliphaticivorans.